Reading from the N-terminus, the 541-residue chain is Valine N-monooxygenase 2 (541 aa).

Residues 1–18 (MAMNVSTTATTTASFAST) are Cytoplasmic-facing. A helical transmembrane segment spans residues 19-41 (SSMNNTAKILLITLFISIVSTVI). At 42–541 (KLQKRASYKK…LAPHLYPTSP (500 aa)) the chain is on the lumenal side. N277 is a glycosylation site (N-linked (GlcNAc...) asparagine). C477 contacts heme. An N-linked (GlcNAc...) asparagine glycan is attached at N505.

Belongs to the cytochrome P450 family. Heme serves as cofactor. In terms of tissue distribution, expressed in the epidermis, the next two cortex cell layers, the endodermis and the pericycle of leaf petioles. Strong expression around the laticifers among the phloem cells and in parenchymatic cells between the protoxylem and the metaxylem cells. In the leaves, preferentially expressed in the mesophyll cells adjacent to the epidermis.

The protein resides in the microsome membrane. The catalysed reaction is L-valine + 2 reduced [NADPH--hemoprotein reductase] + 2 O2 = (E)-2-methylpropanal oxime + 2 oxidized [NADPH--hemoprotein reductase] + CO2 + 3 H2O + 2 H(+). It catalyses the reaction L-valine + reduced [NADPH--hemoprotein reductase] + O2 = N-hydroxy-L-valine + oxidized [NADPH--hemoprotein reductase] + H2O + 2 H(+). The enzyme catalyses N-hydroxy-L-valine + reduced [NADPH--hemoprotein reductase] + O2 = N,N-dihydroxy-L-valine + oxidized [NADPH--hemoprotein reductase] + H2O + H(+). It carries out the reaction L-isoleucine + 2 reduced [NADPH--hemoprotein reductase] + 2 O2 = (1E,2S)-2-methylbutanal oxime + 2 oxidized [NADPH--hemoprotein reductase] + CO2 + 3 H2O + 2 H(+). The catalysed reaction is L-isoleucine + reduced [NADPH--hemoprotein reductase] + O2 = N-hydroxy-L-isoleucine + oxidized [NADPH--hemoprotein reductase] + H2O + 2 H(+). It catalyses the reaction N-hydroxy-L-isoleucine + reduced [NADPH--hemoprotein reductase] + O2 = N,N-dihydroxy-L-isoleucine + oxidized [NADPH--hemoprotein reductase] + H2O + H(+). Functionally, involved in the biosynthesis of the cyanogenic glucosides linamarin and lotaustralin. Can use L-valine or L-isoleucine as substrate. Catalyzes multi-step reactions starting with two successive N-hydroxylations using L-valine and L-isoleucine as substrates leading to the formation of N,N-dihydroxy-L-valine and N,N-dihydroxy-L-isoleucine, respectively; following spontaneous reactions lead to the production of (E)-2-methylpropanal oxime and (1E,2S)-2-methylbutanal oxime, respectively. The sequence is that of Valine N-monooxygenase 2 from Manihot esculenta (Cassava).